Consider the following 338-residue polypeptide: uncharacterized protein (338 aa).

Residues 1–29 (MIKQLYKNITICSLTISTALTVFPATSYA) form the signal peptide.

Belongs to the aerolysin family.

This is an uncharacterized protein from Staphylococcus aureus (strain bovine RF122 / ET3-1).